A 175-amino-acid chain; its full sequence is MKSVYPMSSPSSAVFADQGLSGKANQTQPPPPLGLVVPASKPGAKKPLRKNAWQVAPNLLVSFRYAWAGVSYAFATQRNFRIHTFTGVAVITAASLLHLEAIAVAVLALTSCLVMILELLNTALESVVDLTVGQSYHELAKIAKDCAAGAVLLAAIAAVIVGGCLLLPPLLSLMV.

The next 2 membrane-spanning stretches (helical) occupy residues 55-75 and 96-116; these read VAPN…YAFA and LLHL…LVMI. Glutamate 118 serves as the catalytic Proton acceptor. Residue glutamate 125 participates in a divalent metal cation binding. Residues 151–171 form a helical membrane-spanning segment; sequence VLLAAIAAVIVGGCLLLPPLL.

Belongs to the bacterial diacylglycerol kinase family. Mg(2+) serves as cofactor.

It is found in the cell membrane. The catalysed reaction is a 1,2-diacyl-sn-glycerol + ATP = a 1,2-diacyl-sn-glycero-3-phosphate + ADP + H(+). Functionally, catalyzes the ATP-dependent phosphorylation of sn-l,2-diacylglycerol (DAG) to phosphatidic acid. This Synechocystis sp. (strain ATCC 27184 / PCC 6803 / Kazusa) protein is Diacylglycerol kinase (dgkA).